The primary structure comprises 1399 residues: DNA-directed RNA polymerase subunit beta' (1399 aa).

Zn(2+) is bound by residues cysteine 71, cysteine 73, cysteine 86, and cysteine 89. Residues aspartate 462, aspartate 464, and aspartate 466 each contribute to the Mg(2+) site. 4 residues coordinate Zn(2+): cysteine 810, cysteine 884, cysteine 891, and cysteine 894.

This sequence belongs to the RNA polymerase beta' chain family. In terms of assembly, the RNAP catalytic core consists of 2 alpha, 1 beta, 1 beta' and 1 omega subunit. When a sigma factor is associated with the core the holoenzyme is formed, which can initiate transcription. Mg(2+) is required as a cofactor. The cofactor is Zn(2+).

The catalysed reaction is RNA(n) + a ribonucleoside 5'-triphosphate = RNA(n+1) + diphosphate. Its function is as follows. DNA-dependent RNA polymerase catalyzes the transcription of DNA into RNA using the four ribonucleoside triphosphates as substrates. This is DNA-directed RNA polymerase subunit beta' from Nitrobacter winogradskyi (strain ATCC 25391 / DSM 10237 / CIP 104748 / NCIMB 11846 / Nb-255).